The primary structure comprises 602 residues: Replication protein E1 (602 aa).

A Nuclear localization signal motif is present at residues 79–81; that stretch reads KRK. 2 positions are modified to phosphoserine; by host: serine 85 and serine 92. Residues 91–100 carry the Nuclear export signal motif; the sequence is LSPRLQCISI. Residues 142-305 form a DNA-binding region region; sequence QGAKGLGIVK…TMINHQTAEA (164 aa). In terms of domain architecture, SF3 helicase spans 404–554; it reads INFIQFLDSF…FPFDSDNNPQ (151 aa). 430-437 contacts ATP; the sequence is GPPDTGKS.

This sequence belongs to the papillomaviridae E1 protein family. As to quaternary structure, can form hexamers. Interacts with E2 protein; this interaction increases E1 DNA binding specificity. Interacts with host DNA polymerase subunit POLA2. Interacts with host single stranded DNA-binding protein RPA1. Interacts with host TOP1; this interaction stimulates the enzymatic activity of TOP1. Phosphorylated.

The protein localises to the host nucleus. The catalysed reaction is Couples ATP hydrolysis with the unwinding of duplex DNA by translocating in the 3'-5' direction.. It carries out the reaction ATP + H2O = ADP + phosphate + H(+). In terms of biological role, ATP-dependent DNA 3'-5' helicase required for initiation of viral DNA replication. It forms a complex with the viral E2 protein. The E1-E2 complex binds to the replication origin which contains binding sites for both proteins. During the initial step, a dimer of E1 interacts with a dimer of protein E2 leading to a complex that binds the viral origin of replication with high specificity. Then, a second dimer of E1 displaces the E2 dimer in an ATP-dependent manner to form the E1 tetramer. Following this, two E1 monomers are added to each half of the site, which results in the formation of two E1 trimers on the viral ori. Subsequently, two hexamers will be created. The double hexamer acts as a bi-directional helicase machinery and unwinds the viral DNA and then recruits the host DNA polymerase to start replication. This chain is Replication protein E1, found in Homo sapiens (Human).